The sequence spans 553 residues: Putative transport protein YidE (553 aa).

5 helical membrane passes run Ile-4–Val-24, Gly-28–Ser-48, Phe-65–Ser-85, Leu-95–Phe-115, and Met-158–Leu-178. 2 consecutive RCK C-terminal domains span residues Gln-191–Gln-276 and Asp-279–Asn-361. 6 helical membrane-spanning segments follow: residues Met-371 to Val-391, Gly-393 to Leu-413, Ile-439 to Val-459, Leu-464 to Leu-484, Tyr-493 to Ala-513, and Leu-533 to Gly-553.

The protein belongs to the AAE transporter (TC 2.A.81) family. YidE subfamily.

The protein localises to the cell membrane. The protein is Putative transport protein YidE of Shigella boydii serotype 4 (strain Sb227).